We begin with the raw amino-acid sequence, 1259 residues long: MSLWKKISLGVLIFIVVLLASVAFLVGTTTGLHLVFSAANRWVPGLEIGQVTGGWRDLSLKNIRYEQPGVAVNAGEIHLAIGLDCLWRSSLCVNDLALKDINVAIDSKKMPPSEPAQEEEESGPLNLSTPWPITLSRVALNNINIKIDDTTVSVLDFTSGLAWQEKNLTLKPTRLQGLLIALPKVADVAQEEVVEPKIEKPQPDEKPLGETLKDLFAKPVMPEMTDVHLPLNLNIESFRGEQLRITGDTDLTVRTMLLKVSSIDGNMKLDTLDIDANQGTVKASGTAQLANNWPVDITLNSTLNIDPLKGEKIKLKVGGALREQLEVGVNLSGPMDVALRAQTRLAEAGLPLNLEVVSQRIAWPLTGDTQFQADDLKLKLSGKMTDYTLSMRTAVKGQDIPPATITLDAKGNERQINLDKLTVAALEGKTELKALVDWQQAISWRGELTLNGINTAKEIPDWPAKLNGVMKTKGSLYGGTWQMDVPELKLTGNVKQNSVNVNGTLKGNSYMQWTIPGLHFALGPNSADIKGELGVKELNLDAAIDAPGLDNALPGLGGMAKGIVKVRGTVEAPQLLADITARGLRWQELSVAQARIEGDIKSTDQIAGHLNVRVERISQPDVNINLVTLDAKGSEKQHQLQLRVQGEPVSGQLSLTGSFDREAARWKGTLSDTRFQTPVGPWSLTRAIALDYRNKEQKISIGPHCWLNPNAELCIPQTIDAGAAGRAVVNLNRFDLAMLKPFMPDTTQASGIFSGKADVSWDTTQEGLPQGKVTLSGRNVKVTQTVNDAPLPVAFETLNLSADLHNNRAELGWLIRLTNNGQFDGQVQVTDPQGRRNLGGNVNMRNLNLAMVNPVFSRGEKAAGMLNARLRLGGDVQSPQLFGQLQLSALDIDGNFMPFEMQPSQLTMNFSGTRSTLAGIVRTQQGQINLNGNADWSQIDNWRARVTAKGSRVRITVPPMVRLDVSPDVVFDATPSLFTLDGRVDVPWARIVVHDLPESAVGVSSDVVMLNNDLQPETPQTASIPINSNLTVHVGNNVRIDAFGLKARLTGDLKVAQDKQGLGLNGQINIPDGRFRAYGQDLLVRKGELLFSGPPDQPLLNIEAIRNPDATEDDVIAGVRVTGTADEPKAEIFSDPAMPQAEALSYLLRGQGLDSNQSDSAAMTSMLIGLGVAQSGQVVGKIGETFGVSNLALDTQGVGDSSQVVVSGYVLPGLQVKYGVGIFDSLATLTLRYRLMPKLYLEAVSGVDQALDLLYQFEF.

Over 1 to 6 the chain is Cytoplasmic; sequence MSLWKK. A helical; Signal-anchor for type II membrane protein transmembrane segment spans residues 7–27; the sequence is ISLGVLIFIVVLLASVAFLVG. Residues 28 to 1259 are Periplasmic-facing; it reads TTTGLHLVFS…ALDLLYQFEF (1232 aa).

This sequence belongs to the TamB family. As to quaternary structure, interacts with TamA to form the translocation and assembly module (TAM).

The protein localises to the cell inner membrane. Component of the translocation and assembly module (TAM), which facilitates the insertion and assembly of specific beta-barrel proteins into the outer membrane. In terms of biological role, in addition, is involved in outer membrane lipid homeostasis. Likely transports phospholipids between the inner membrane and the outer membrane. In Salmonella typhimurium (strain SL1344), this protein is Translocation and assembly module subunit TamB (tamB).